The chain runs to 624 residues: Exocyst complex component EXO70B1 (624 aa).

A disordered region spans residues 148–176 (FGLNPQGDAGAMNHRFDSEEEEDDDRDFN).

It belongs to the EXO70 family. Interacts with EXO70B2, SEC5A and EXO84B. Binds to PUB18. Binds directly to B1L at the plasma membrane and in small vesicles. Post-translationally, target of the E3 ubiquitin-protein ligase PUB18 that mediates its ubiquitination and degradation via the 26S proteasome.

Its subcellular location is the cytoplasmic vesicle. The protein localises to the phagosome. The protein resides in the endomembrane system. It is found in the cell membrane. It localises to the vesicle. Its function is as follows. Component of an exocyst subcomplex specifically involved in autophagy-related, Golgi-independent membrane traffic to the vacuole. Regulates autophagosome formation and autophagy-related Golgi-independent import into the vacuole. Positive regulator of both abscisic acid (ABA)-promoted and mannitol (drought)-promoted stomatal closure. Involved in the regulation of lateral root formation. The chain is Exocyst complex component EXO70B1 from Arabidopsis thaliana (Mouse-ear cress).